Here is a 505-residue protein sequence, read N- to C-terminus: MEIPRQTEMVELVPNGKHLEGLLPVGVPTTDTQRTEDTQHCGEGKGFLQKSPSKEPHFTDFEGKTSFGMSVFNLSNAIMGSGILGLAYAMANTGIILFLFLLTAVALLSSYSIHLLLKSSGIVGIRAYEQLGYRAFGTPGKLAAALAITLQNIGAMSSYLYIIKSELPLVIQTFLNLEKPASVWYMDGNYLVILVSVTIILPLALMRQLGYLGYSSGFSLSCMVFFLIAVIYKKFQVPCPLAHNLANATGNFSHMVVAEEKAQLQGEPDTAAEAFCTPSYFTLNSQTAYTIPIMAFAFVCHPEVLPIYTELKDPSKRKMQHISNLSIAVMYVMYFLAALFGYLTFYDGVESELLHTYSKVDPFDVLILCVRVAVLIAVTLTVPIVLFPVRRAIQQMLFQNQEFSWLRHVLIATGLLTCINLLVIFAPNILGIFGIIGATSAPCLIFIFPAIFYFRIMPTDKEPARSTPKILALCFAAVGFLLMTMSLSFIIIDWVSGTSQHGGNH.

The interval 27 to 48 (VPTTDTQRTEDTQHCGEGKGFL) is disordered. Over residues 33–43 (QRTEDTQHCGE) the composition is skewed to basic and acidic residues. The N-linked (GlcNAc...) asparagine glycan is linked to Asn-73. Helical transmembrane passes span 82–102 (GILG…LFLL), 105–125 (VALL…IVGI), 143–163 (AAAL…LYII), 186–206 (MDGN…LALM), and 212–232 (LGYS…AVIY). Cys-239 and Cys-276 form a disulfide bridge. N-linked (GlcNAc...) asparagine glycosylation is found at Asn-247 and Asn-251. The helical transmembrane segment at 288-308 (AYTIPIMAFAFVCHPEVLPIY) threads the bilayer. Asn-324 is a glycosylation site (N-linked (GlcNAc...) asparagine). A run of 5 helical transmembrane segments spans residues 325-345 (LSIA…YLTF), 367-387 (ILCV…IVLF), 409-429 (VLIA…APNI), 432-452 (IFGI…PAIF), and 472-492 (ALCF…FIII).

Belongs to the amino acid/polyamine transporter 2 family. Expressed predominantly in liver, moderately expressed in kidney and brain, and barely detectable in heart and muscle. Within liver, expressed in hepatocytes. Not detected in testis. Expressed in cells of the ganglion cell layer, in soma of some cells of the inner nuclear layer (at protein level). Expressed in the inner segments of photoreceptor cells.

It is found in the cell membrane. It localises to the basolateral cell membrane. The enzyme catalyses L-histidine(out) + Na(+)(out) + H(+)(in) = L-histidine(in) + Na(+)(in) + H(+)(out). It carries out the reaction L-glutamine(out) + Na(+)(out) + H(+)(in) = L-glutamine(in) + Na(+)(in) + H(+)(out). It catalyses the reaction L-asparagine(out) + Na(+)(out) + H(+)(in) = L-asparagine(in) + Na(+)(in) + H(+)(out). Functionally, symporter that cotransports specific neutral amino acids and sodium ions, coupled to an H(+) antiporter activity. Mainly participates in the glutamate-GABA-glutamine cycle in brain where it transports L-glutamine from astrocytes in the intercellular space for the replenishment of both neurotransmitters glutamate and gamma-aminobutyric acid (GABA) in neurons and also functions as the major influx transporter in ganglion cells mediating the uptake of glutamine. The transport activity is specific for L-glutamine, L-histidine and L-asparagine. The transport is electroneutral coupled to the cotransport of 1 Na(+) and the antiport of 1 H(+). The transport is pH dependent, saturable, Li(+) tolerant and functions in both direction depending on the concentration gradients of its substrates and cotransported ions. Also mediates an amino acid-gated H(+) conductance that is not stoichiometrically coupled to the amino acid transport but which influences the ionic gradients that drive the amino acid transport. In addition, may play a role in nitrogen metabolism, amino acid homeostasis, glucose metabolism and renal ammoniagenesis. This is Sodium-coupled neutral amino acid transporter 3 from Mus musculus (Mouse).